We begin with the raw amino-acid sequence, 599 residues long: Bile salt-activated lipase (599 aa).

Positions 1-20 (MGRLEVLFLGLTCCLAAACA) are cleaved as a signal peptide. An intrachain disulfide couples cysteine 84 to cysteine 100. N-linked (GlcNAc...) asparagine glycosylation is present at asparagine 207. The Acyl-ester intermediate role is filled by serine 214. Cysteine 266 and cysteine 277 are disulfide-bonded. Asparagine 325 carries N-linked (GlcNAc...) asparagine glycosylation. Active-site charge relay system residues include aspartate 340 and histidine 455. A disordered region spans residues 553-599 (TGDQDTLTPPEDDSEVAPDPPSDDSQVVPVPPTDDSVEAQMPATIGF). 3 repeat units span residues 559–569 (LTPPEDDSEVA), 570–580 (PDPPSDDSQVV), and 581–588 (PVPPTDDS). The tract at residues 559–588 (LTPPEDDSEVAPDPPSDDSQVVPVPPTDDS) is 4 X 11 AA tandem repeats, O-glycosylated region.

This sequence belongs to the type-B carboxylesterase/lipase family. Interacts with CLC. As to expression, EXpressed by eosinophils.

It is found in the secreted. It catalyses the reaction a triacylglycerol + H2O = a diacylglycerol + a fatty acid + H(+). The enzyme catalyses 1,2,3-tri-(9Z-octadecenoyl)-glycerol + H2O = di-(9Z)-octadecenoylglycerol + (9Z)-octadecenoate + H(+). It carries out the reaction 1,2,3-trioctanoylglycerol + H2O = dioctanoylglycerol + octanoate + H(+). The catalysed reaction is a sterol ester + H2O = a sterol + a fatty acid + H(+). It catalyses the reaction an acetyl ester + H2O = an aliphatic alcohol + acetate + H(+). The enzyme catalyses a butanoate ester + H2O = an aliphatic alcohol + butanoate + H(+). It carries out the reaction 9-hexadecanoyloxy-octadecanoate + H2O = 9-hydroxy-octadecanoate + hexadecanoate + H(+). The catalysed reaction is 9-(9Z-octadecenoyloxy)-octadecanoate + H2O = 9-hydroxy-octadecanoate + (9Z)-octadecenoate + H(+). It catalyses the reaction cholesteryl (9Z-octadecenoate) + H2O = cholesterol + (9Z)-octadecenoate + H(+). The enzyme catalyses 1-hexadecanoyl-sn-glycero-3-phosphocholine + H2O = sn-glycerol 3-phosphocholine + hexadecanoate + H(+). It carries out the reaction 12-hexadecanoyloxy-octadecanoate + H2O = 12-hydroxyoctadecanoate + hexadecanoate + H(+). The catalysed reaction is 12-(9Z-octadecenoyloxy)-octadecanoate + H2O = 12-hydroxyoctadecanoate + (9Z)-octadecenoate + H(+). It catalyses the reaction 13-(9Z-octadecenoyloxy)-octadecanoate + H2O = 13-hydroxy-octadecanoate + (9Z)-octadecenoate + H(+). The enzyme catalyses 9-(9Z-hexadecenoyloxy)-octadecanoate + H2O = (9Z)-hexadecenoate + 9-hydroxy-octadecanoate + H(+). It carries out the reaction 12-(9Z-hexadecenoyloxy)-octadecanoate + H2O = 12-hydroxyoctadecanoate + (9Z)-hexadecenoate + H(+). The catalysed reaction is 13-(9Z-hexadecenoyloxy)-octadecanoate + H2O = 13-hydroxy-octadecanoate + (9Z)-hexadecenoate + H(+). It catalyses the reaction 12-octadecanoyloxy-octadecanoate + H2O = 12-hydroxyoctadecanoate + octadecanoate + H(+). The enzyme catalyses 13-octadecanoyloxy-octadecanoate + H2O = 13-hydroxy-octadecanoate + octadecanoate + H(+). It carries out the reaction 5-(9Z-hexadecenoyloxy)-octadecanoate + H2O = 5-hydroxy-octadecanoate + (9Z)-hexadecenoate + H(+). The catalysed reaction is 9-octadecanoyloxy-octadecanoate + H2O = 9-hydroxy-octadecanoate + octadecanoate + H(+). With respect to regulation, activated by bile salts such as sodium taurocholate. Its function is as follows. Catalyzes the hydrolysis of a wide range of substrates including cholesteryl esters, phospholipids, lysophospholipids, di- and tri-acylglycerols, and fatty acid esters of hydroxy fatty acids (FAHFAs). Preferentially hydrolyzes FAHFAs with the ester bond further away from the carboxylate. Unsaturated FAHFAs are hydrolyzed more quickly than saturated FAHFAs. Has an essential role in the complete digestion of dietary lipids and their intestinal absorption, along with the absorption of fat-soluble vitamins. In Mus musculus (Mouse), this protein is Bile salt-activated lipase (Cel).